Consider the following 311-residue polypeptide: JNK1/MAPK8-associated membrane protein (311 aa).

Topologically, residues 1–57 are lumenal; that stretch reads MAVDIQPACLGLYCGKTLLFKNGSTEIYGECGVCPRGQRTNAQKYCQPCTESPELYD. Asparagine 22 is a glycosylation site (N-linked (GlcNAc...) asparagine). Residues 58–78 traverse the membrane as a helical segment; sequence WLYLGFMAMLPLVLHWFFIEW. Residues 79-87 are Cytoplasmic-facing; the sequence is YSGKKSSSA. The chain crosses the membrane as a helical span at residues 88–108; the sequence is LFQHITALFECSMAAIITLLV. Residues 109–149 lie on the Lumenal side of the membrane; that stretch reads SDPVGVLYIRSCRVLMLSDWYTMLYNPSPDYVTTVHCTHEA. Residues 150–170 form a helical membrane-spanning segment; the sequence is VYPLYTIVFIYYAFCLVLMML. The Cytoplasmic segment spans residues 171–188; sequence LRPLLVKKIACGLGKSDR. Residues 189-209 form a helical membrane-spanning segment; it reads FKSIYAALYFFPILTVLQAVG. Residue glycine 210 is a topological domain, lumenal. The helical transmembrane segment at 211-231 threads the bilayer; the sequence is GLLYYAFPYIILVLSLVTLAV. Residues 232 to 250 lie on the Cytoplasmic side of the membrane; it reads YMSASEIENCYDLLVRKKR. The helical transmembrane segment at 251 to 271 threads the bilayer; it reads LIVLFSHWLLHAYGIISISRV. The Lumenal segment spans residues 272–277; it reads DKLEQD. Residues 278–298 form a helical membrane-spanning segment; it reads LPLLALVPTPALFYLFTAKFT. At 299–311 the chain is on the cytoplasmic side; it reads EPSRILSEGANGH.

In terms of assembly, interacts with RNF5 and MAPK8, but not with MAPK9. Binding to MAPK8 occurs before and after exposure to stress, such as UV irradiation. After exposure to stress, interacts with phosphorylated MAPK8. Competes with DUSP10 for MAPK8 binding. Associates with multiple components of the proteasome and with ERAD regulatory proteins including AMFR/GP78, CANX, PSMC1, PSMC2, PSMC3/TBP1, PSMC5, PSMC6, PSMD8, SEC61-ALPHA and UFD1. Interacts with DERL1 (in the presence of misfolded protein CFTR(F508del)). In terms of processing, ubiquitinated by RNF5 via 'Lys-63'-linked ubiquitin linkage in a UBE2N-dependent manner. Ubiquitination decreases association with components of the proteasome and ERAD.

The protein resides in the endoplasmic reticulum membrane. Functionally, regulates the duration of MAPK8 activity in response to various stress stimuli. Facilitates degradation of misfolded endoplasmic reticulum (ER) proteins through the recruitment of components of the proteasome and endoplasmic reticulum-associated degradation (ERAD) system. This Homo sapiens (Human) protein is JNK1/MAPK8-associated membrane protein (JKAMP).